Reading from the N-terminus, the 583-residue chain is Selenocysteine-specific elongation factor (583 aa).

The 199-residue stretch at 5–203 folds into the tr-type G domain; it reads RVNVNVGVLG…LLKSQISIPT (199 aa). Residues 14–21 are G1; sequence GHIDSGKT. GTP contacts are provided by glycine 19, threonine 21, and alanine 22. Threonine 21 contacts Mg(2+). The segment at 46–50 is G2; it reads GITLD. Threonine 48 and aspartate 78 together coordinate Mg(2+). The G3 stretch occupies residues 78 to 81; that stretch reads DCPG. The G4 stretch occupies residues 132–135; that stretch reads NKID. The GTP site is built by aspartate 135 and lysine 173. A G5 region spans residues 171–173; sequence AAK. Residues 371–390 form a disordered region; sequence MPTATEGDDEADPKAGHAPG. Serine 524 is subject to Phosphoserine. A disordered region spans residues 528–562; sequence KKILTPTLKKRSRAGRGETTKPEEGTERPEPIQPV. Residue threonine 532 is modified to Phosphothreonine. Residues 534 to 540 carry the Nuclear localization signal motif; that stretch reads TLKKRSR. Basic and acidic residues predominate over residues 542-557; that stretch reads GRGETTKPEEGTERPE. Residue arginine 543 is modified to Omega-N-methylarginine.

The protein belongs to the TRAFAC class translation factor GTPase superfamily. Classic translation factor GTPase family. SelB subfamily. Mg(2+) is required as a cofactor. Requires Mn(2+) as cofactor.

It is found in the cytoplasm. It localises to the nucleus. The catalysed reaction is GTP + H2O = GDP + phosphate + H(+). Translation factor required for the incorporation of the rare amino acid selenocysteine encoded by UGA codons. Replaces the eRF1-eRF3-GTP ternary complex for the insertion of selenocysteine directed by the UGA codon. Insertion of selenocysteine at UGA codons is mediated by SECISBP2 and EEFSEC: SECISBP2 (1) specifically binds the SECIS sequence once the 80S ribosome encounters an in-frame UGA codon and (2) contacts the RPS27A/eS31 of the 40S ribosome before ribosome stalling. (3) GTP-bound EEFSEC then delivers selenocysteinyl-tRNA(Sec) to the 80S ribosome and adopts a preaccommodated state conformation. (4) After GTP hydrolysis, EEFSEC dissociates from the assembly, selenocysteinyl-tRNA(Sec) accommodates, and peptide bond synthesis and selenoprotein elongation occur. The protein is Selenocysteine-specific elongation factor (Eefsec) of Mus musculus (Mouse).